The sequence spans 312 residues: MTFDENISRILVTDKEYDMPFSKGLLARSLSAAGMKPSESYTLAREIERDLTEQNVLKISKDELRRRVYYTLINRDYEGIGEKYLLWRRVLKKHSIIILVGGSSGVGTSTIAFELASRLGIPSVIGTDSIREVMRRSISKDLVPMLYESSYTAWTALRRSQWEEQDTKGMHLLGFERHVEPVLLGIESIIDRSLTEGTSVIIEGTHIVPGLMGEKYQSMPNVIFLNLTLSSEEIHKKRFTARAKVSDRPLERYLENFEIIKEINQYIVEKSKENNVPVIENVSISETVQKCLEIVTERFSNLTDEPIDSDFY.

The 88-residue stretch at 8–95 (SRILVTDKEY…LWRRVLKKHS (88 aa)) folds into the ATP-cone domain.

The protein belongs to the 2-phosphoglycerate kinase family. Requires a divalent metal cation as cofactor.

The enzyme catalyses (2R)-2-phosphoglycerate + ATP = (2R)-2,3-bisphosphoglycerate + ADP + H(+). It functions in the pathway thermoadapter biosynthesis; cyclic 2,3-diphosphoglycerate biosynthesis; cyclic 2,3-diphosphoglycerate from 2-phospho-D-glycerate: step 1/2. Functionally, catalyzes the phosphorylation of 2-phosphoglycerate to 2,3-diphosphoglycerate. Involved in the biosynthesis of cyclic 2,3-bisphosphoglycerate, a thermoprotectant. This chain is 2-phosphoglycerate kinase, found in Methanococcus maripaludis (strain C7 / ATCC BAA-1331).